The sequence spans 484 residues: Probable glycine dehydrogenase (decarboxylating) subunit 2 (484 aa).

K264 bears the N6-(pyridoxal phosphate)lysine mark.

Belongs to the GcvP family. C-terminal subunit subfamily. In terms of assembly, the glycine cleavage system is composed of four proteins: P, T, L and H. In this organism, the P 'protein' is a heterodimer of two subunits. Requires pyridoxal 5'-phosphate as cofactor.

The enzyme catalyses N(6)-[(R)-lipoyl]-L-lysyl-[glycine-cleavage complex H protein] + glycine + H(+) = N(6)-[(R)-S(8)-aminomethyldihydrolipoyl]-L-lysyl-[glycine-cleavage complex H protein] + CO2. In terms of biological role, the glycine cleavage system catalyzes the degradation of glycine. The P protein binds the alpha-amino group of glycine through its pyridoxal phosphate cofactor; CO(2) is released and the remaining methylamine moiety is then transferred to the lipoamide cofactor of the H protein. This chain is Probable glycine dehydrogenase (decarboxylating) subunit 2, found in Legionella pneumophila (strain Lens).